A 167-amino-acid polypeptide reads, in one-letter code: Osteocalcin 2a (167 aa).

Positions 1 to 18 are cleaved as a signal peptide; that stretch reads MKSLTLLTICAVLSVSLS. The propeptide occupies 19–118; sequence MNDLALDVVL…LASVLLRRKR (100 aa). The interval 28 to 99 is disordered; it reads LDPAPDPATE…TTEDPAAATE (72 aa). Low complexity predominate over residues 38-87; it reads PAPAADSSASSSASSSSSSASDSSASASDSSDSDSSSASSSSSSSESASA. In terms of domain architecture, Gla spans 131–163; it reads QVESLSEVCELNLACEHMAETAGIVAAYTAYYG. Residues Glu-133, Glu-137, and Glu-140 each coordinate Ca(2+). 3 positions are modified to 4-carboxyglutamate: Glu-133, Glu-137, and Glu-140. Cys-139 and Cys-145 are joined by a disulfide.

This sequence belongs to the osteocalcin/matrix Gla protein family. Post-translationally, gamma-carboxyglutamate residues are formed by vitamin K dependent carboxylation. These residues are essential for the binding of calcium.

Its subcellular location is the secreted. Its function is as follows. Binds strongly to apatite and calcium. The protein is Osteocalcin 2a of Oncorhynchus mykiss (Rainbow trout).